Consider the following 101-residue polypeptide: Putative pterin-4-alpha-carbinolamine dehydratase (101 aa).

This sequence belongs to the pterin-4-alpha-carbinolamine dehydratase family.

The enzyme catalyses (4aS,6R)-4a-hydroxy-L-erythro-5,6,7,8-tetrahydrobiopterin = (6R)-L-erythro-6,7-dihydrobiopterin + H2O. The chain is Putative pterin-4-alpha-carbinolamine dehydratase from Nitrobacter winogradskyi (strain ATCC 25391 / DSM 10237 / CIP 104748 / NCIMB 11846 / Nb-255).